A 429-amino-acid chain; its full sequence is Cyclin-B2-1 (429 aa).

The protein belongs to the cyclin family. Cyclin AB subfamily. Interacts with CDC20-1 and CDC20-2. As to expression, expressed in roots, stems, leaves, flowers and siliques.

The protein is Cyclin-B2-1 (CYCB2-1) of Arabidopsis thaliana (Mouse-ear cress).